Reading from the N-terminus, the 69-residue chain is Large ribosomal subunit protein uL29 (69 aa).

Belongs to the universal ribosomal protein uL29 family.

This Rhodospirillum centenum (strain ATCC 51521 / SW) protein is Large ribosomal subunit protein uL29.